The primary structure comprises 100 residues: Urease subunit gamma (100 aa).

The protein belongs to the urease gamma subunit family. As to quaternary structure, heterotrimer of UreA (gamma), UreB (beta) and UreC (alpha) subunits. Three heterotrimers associate to form the active enzyme.

It is found in the cytoplasm. The enzyme catalyses urea + 2 H2O + H(+) = hydrogencarbonate + 2 NH4(+). Its pathway is nitrogen metabolism; urea degradation; CO(2) and NH(3) from urea (urease route): step 1/1. In Chelativorans sp. (strain BNC1), this protein is Urease subunit gamma.